Here is a 217-residue protein sequence, read N- to C-terminus: Yop proteins translocation protein R (217 aa).

4 helical membrane-spanning segments follow: residues 11 to 31, 53 to 73, 157 to 177, and 181 to 201; these read IIVLSLLTLLPLISVMATSFV, MAMYGLAIILSLYVMAPVGFA, IGFLIYLPFIVIDLVISNILL, and MMMVSPMTISLPFKLLLFVLL.

The protein belongs to the FliP/MopC/SpaP family.

The protein localises to the cell membrane. Its function is as follows. Component of the yop secretion machinery. May have a role in the negative pathway regulation of yop expression controlled by calcium. This Yersinia pestis protein is Yop proteins translocation protein R (yscR).